Consider the following 598-residue polypeptide: Aspartate--tRNA(Asp/Asn) ligase (598 aa).

An L-aspartate-binding site is contributed by Glu170. The segment at 194 to 197 is aspartate; it reads QLFK. Arg216 lines the L-aspartate pocket. ATP is bound by residues 216–218 and Gln225; that span reads RDE. Residue His448 participates in L-aspartate binding. Glu482 contributes to the ATP binding site. Residue Arg489 participates in L-aspartate binding. 534-537 contacts ATP; the sequence is GWDR. The interval 558–598 is disordered; the sequence is GGGVDPLTDAPAPITPQQRKESGIDAKPREDKPKEDAKSKA. Residues 575 to 598 show a composition bias toward basic and acidic residues; it reads QRKESGIDAKPREDKPKEDAKSKA.

It belongs to the class-II aminoacyl-tRNA synthetase family. Type 1 subfamily. Homodimer.

The protein localises to the cytoplasm. It catalyses the reaction tRNA(Asx) + L-aspartate + ATP = L-aspartyl-tRNA(Asx) + AMP + diphosphate. Functionally, aspartyl-tRNA synthetase with relaxed tRNA specificity since it is able to aspartylate not only its cognate tRNA(Asp) but also tRNA(Asn). Reaction proceeds in two steps: L-aspartate is first activated by ATP to form Asp-AMP and then transferred to the acceptor end of tRNA(Asp/Asn). The chain is Aspartate--tRNA(Asp/Asn) ligase from Mycolicibacterium smegmatis (strain ATCC 700084 / mc(2)155) (Mycobacterium smegmatis).